A 521-amino-acid polypeptide reads, in one-letter code: 2,3-bisphosphoglycerate-independent phosphoglycerate mutase (521 aa).

The Mn(2+) site is built by D18 and S68. The Phosphoserine intermediate role is filled by S68. Substrate-binding positions include H129, 158–159, R190, R196, 266–269, and K343; these read RD and RSDR. 5 residues coordinate Mn(2+): D410, H414, D451, H452, and H470.

The protein belongs to the BPG-independent phosphoglycerate mutase family. In terms of assembly, monomer. Requires Mn(2+) as cofactor.

It catalyses the reaction (2R)-2-phosphoglycerate = (2R)-3-phosphoglycerate. The protein operates within carbohydrate degradation; glycolysis; pyruvate from D-glyceraldehyde 3-phosphate: step 3/5. Functionally, catalyzes the interconversion of 2-phosphoglycerate and 3-phosphoglycerate. This Hydrogenovibrio crunogenus (strain DSM 25203 / XCL-2) (Thiomicrospira crunogena) protein is 2,3-bisphosphoglycerate-independent phosphoglycerate mutase.